The primary structure comprises 447 residues: Beta-glucuronosyltransferase GlcAT14A (447 aa).

The Cytoplasmic segment spans residues 1 to 33; that stretch reads MKKLRSYYSNVRHHQNHHHHHHHHSNIVSSERK. The chain crosses the membrane as a helical; Signal-anchor for type II membrane protein span at residues 34-54; that stretch reads WIFFPLLIGSIFALFLLFLTT. The Lumenal segment spans residues 55–447; the sequence is TLTSPTGGVR…TENFRSKQCK (393 aa). Residues Asn151, Asn200, Asn329, and Asn405 are each glycosylated (N-linked (GlcNAc...) asparagine).

It belongs to the glycosyltransferase 14 family.

It localises to the golgi apparatus membrane. Beta-glucuronosyltransferase involved in the biosynthesis of type II arabinogalactan (AG). Modifies both the beta-1,6-linked galactan and beta-1,3-linked galactan present in type II AG. Transfers glucuronate to beta-1,6-galactooligosaccharides with degrees of polymerization ranging from 3 to 11. Transfers glucuronate to beta-1,3-galactooligosaccharides with degrees of polymerization ranging from 5 to 7. The addition of glucuronate at the O6 position may terminate galactose chain extension. Required for cell elongation during seedling growth. The polypeptide is Beta-glucuronosyltransferase GlcAT14A (Arabidopsis thaliana (Mouse-ear cress)).